The primary structure comprises 317 residues: Adenine deaminase (317 aa).

Residues H14, H16, and H194 each contribute to the Zn(2+) site. E197 acts as the Proton donor in catalysis. A Zn(2+)-binding site is contributed by D275. A substrate-binding site is contributed by D276.

The protein belongs to the metallo-dependent hydrolases superfamily. Adenosine and AMP deaminases family. Adenine deaminase type 2 subfamily. Zn(2+) serves as cofactor.

It carries out the reaction adenine + H2O + H(+) = hypoxanthine + NH4(+). Its function is as follows. Catalyzes the hydrolytic deamination of adenine to hypoxanthine. Plays an important role in the purine salvage pathway and in nitrogen catabolism. The chain is Adenine deaminase from Pseudomonas savastanoi pv. phaseolicola (strain 1448A / Race 6) (Pseudomonas syringae pv. phaseolicola (strain 1448A / Race 6)).